The following is a 257-amino-acid chain: Short-chain dehydrogenase reductase 3a (257 aa).

12 to 36 contacts NAD(+); sequence IITGGASGIGAEAVRLFTDHGAKVV. Ser-144 lines the substrate pocket. Tyr-157 (proton acceptor) is an active-site residue.

It belongs to the short-chain dehydrogenases/reductases (SDR) family. As to expression, highly expressed in the radicle tip, lateral root primordia and tips, and the area surrounding the cotyledon hydathode of young seedlings.

Functionally, confers resistance to the incompatible pathogenic bacteria P.syringae pv. tomato DC3000 in a PR1-dependent manner. Seems not involved in abscisic acid (ABA) biosynthesis. This chain is Short-chain dehydrogenase reductase 3a (SDR3a), found in Arabidopsis thaliana (Mouse-ear cress).